The chain runs to 299 residues: MAKTLPFSRALLLSLSILLVARAISAGDIAIYWGQNGGEGTLASTCDTGRYAYVIVSFVTTFGNFRAPVVNLAGHCDPAAGTCTGLSDEIRSCQGKDIKVLMSIGGGAGDYSLVSEADADNFADYLWNNFLGGQSSSRPLGDAVLDGIDFDIELGTTTFYDTLARALSSRSTQAAKVYLTAAPQCPHPDSHLDAALNTGLFDNVWIQFYNNPLAQCQYSSGNTNDILSSWNTWTSSTTAGKIFLGLPAAPEAAGSGYIPPDVLTGQILPQIKTSAKYGGVMLYSKFYDTTYSTTIKDQV.

The transit peptide at 1 to 26 (MAKTLPFSRALLLSLSILLVARAISA) directs the protein to the amyloplast. The GH18 domain maps to 27–299 (GDIAIYWGQN…TYSTTIKDQV (273 aa)). 2 cysteine pairs are disulfide-bonded: Cys-46–Cys-93 and Cys-76–Cys-83. The Proton donor role is filled by Glu-153. Cys-185 and Cys-216 are disulfide-bonded.

It belongs to the glycosyl hydrolase 18 family. Chitinase class III subfamily. In terms of assembly, monomer. In terms of tissue distribution, highly expressed in seeds and to a lesser extent in the skin of the pomegranate fruit (at protein level). Not expressed in leaves or flesh of the fruit (at protein level).

It is found in the plastid. It localises to the amyloplast. The enzyme catalyses Random endo-hydrolysis of N-acetyl-beta-D-glucosaminide (1-&gt;4)-beta-linkages in chitin and chitodextrins.. Activity is not affected by addition of 10 mM Ca(2+) or removal of Ca(2+). Hydrolyzes chitin. Probable calcium storage protein of the seeds. Binds calcium ions with high capacity and low affinity. Involved in seed germination. The polypeptide is Acidic endochitinase Pun g 14, amyloplastic (Punica granatum (Pomegranate)).